The sequence spans 806 residues: MASGADSKGDDLSTAILKQKNRPNRLIVDEAINEDNSVVSLSQPKMDELQLFRGDTVLLKGKKRREAVCIVLSDDTCSDEKIRMNRVVRNNLRVHLGDVISIQPCPDVKYGKRIHVLPIDDTVEGITGNLFEVYLKPYFLEAYRPIRKGDIFLVRGGMRAVEFKVVETDPSPYCIVAPDTVIHCEGEPIKREDEEESLNEVGYDDIGGCRKQLAQIKEMVELPLRHPALFKAIGVKPPRGILLYGPPGTGKTLIARAVANETGAFFFLINGPEIMSKLAGESESNLRKAFEEAEKNAPAIIFIDELDAIAPKREKTHGEVERRIVSQLLTLMDGLKQRAHVIVMAATNRPNSIDPALRRFGRFDREVDIGIPDATGRLEILQIHTKNMKLADDVDLEQVANETHGHVGADLAALCSEAALQAIRKKMDLIDLEDETIDAEVMNSLAVTMDDFRWALSQSNPSALRETVVEVPQVTWEDIGGLEDVKRELQELVQYPVEHPDKFLKFGMTPSKGVLFYGPPGCGKTLLAKAIANECQANFISIKGPELLTMWFGESEANVREIFDKARQAAPCVLFFDELDSIAKARGGNIGDGGGAADRVINQILTEMDGMSTKKNVFIIGATNRPDIIDPAILRPGRLDQLIYIPLPDEKSRVAILKANLRKSPVAKDVDLEFLAKMTNGFSGADLTEICQRACKLAIRESIESEIRRERERQTNPSAMEVEEDDPVPEIRRDHFEEAMRFARRSVSDNDIRKYEMFAQTLQQSRGFGSFRFPSGNQGGAGPSQGSGGGTGGNVYTEDNDDDLYG.

At Ala2 the chain carries N-acetylalanine. Residues Ser3 and Ser7 each carry the phosphoserine modification. A Glycyl lysine isopeptide (Lys-Gly) (interchain with G-Cter in SUMO2) cross-link involves residue Lys8. At Ser13 the chain carries Phosphoserine. Lys18 participates in a covalent cross-link: Glycyl lysine isopeptide (Lys-Gly) (interchain with G-Cter in SUMO2). Ser37 carries the phosphoserine modification. 247-253 (PGTGKTL) contacts ATP. Lys315 is subject to N6,N6,N6-trimethyllysine; by VCPKMT. Residues Asn348 and His384 each coordinate ATP. Phosphothreonine is present on Thr436. Position 462 is a phosphoserine (Ser462). An N6-acetyllysine mark is found at Lys502 and Lys505. 521–526 (GCGKTL) provides a ligand contact to ATP. Lys668 bears the N6-acetyllysine; alternate mark. Lys668 is subject to N6-succinyllysine; alternate. Phosphoserine is present on Ser702. Residues 708–727 (RRERERQTNPSAMEVEEDDP) are disordered. Residue Lys754 is modified to N6-acetyllysine. The tract at residues 768–806 (FGSFRFPSGNQGGAGPSQGSGGGTGGNVYTEDNDDDLYG) is disordered. 3 positions are modified to phosphoserine: Ser770, Ser775, and Ser787. Residues 777 to 793 (NQGGAGPSQGSGGGTGG) show a composition bias toward gly residues. An interaction with UBXN6 region spans residues 797 to 806 (TEDNDDDLYG). The PIM motif motif lies at 802–806 (DDLYG). Residue Tyr805 is modified to Phosphotyrosine.

It belongs to the AAA ATPase family. As to quaternary structure, homohexamer. Forms a ring-shaped particle of 12.5 nm diameter, that displays 6-fold radial symmetry. Part of a ternary complex containing STX5A, NSFL1C and VCP. NSFL1C forms a homotrimer that binds to one end of a VCP homohexamer. The complex binds to membranes enriched in phosphatidylethanolamine-containing lipids and promotes Golgi membrane fusion. Binds to a heterodimer of NPLOC4 and UFD1, binding to this heterodimer inhibits Golgi-membrane fusion. Interaction with VCIP135 leads to dissociation of the complex via ATP hydrolysis by VCP. Part of a ternary complex containing NPLOC4, UFD1 and VCP. Interacts with NSFL1C-like protein p37; the complex has membrane fusion activity and is required for Golgi and endoplasmic reticulum biogenesis. Interacts with SELENOS and SYVN1, as well as with DERL1 (via SHP-box motif), DERL2 and DERL3; which probably transfer misfolded proteins from the ER to VCP. Interacts with SVIP and DERL1. Component of a complex required to couple retrotranslocation, ubiquitination and deglycosylation composed of NGLY1, SAKS1, AMFR, VCP and RAD23B. Part of a complex composed of STUB1/CHIP, VCP/p97, CHRNA3, and UBXN2A that modulates the ubiquitination and endoplasmic reticulum-associated degradation (ERAD) of CHRNA3. Within the complex UBXN2A acts as a scaffold protein required for the interaction of CHRNA3 with VCP/p97, this interaction also inhibits CHRNA3 ubiquitination by STUB1/CHIP and subsequently ERAD. Interacts with UBXN2A (via UBX domain); the interaction is required for the interaction of CHRNA3 in the STUB1-VCP-UBXN2A complex. Directly interacts with UBXN4 and RNF19A. Interacts with CASR. Interacts with UBE4B and YOD1. Interacts with clathrin. Interacts with RNF103. Interacts with TRIM13 and TRIM21. Component of a VCP/p97-AMFR/gp78 complex that participates in the final step of the endoplasmic reticulum-associated degradation (ERAD) of HMGCR. Interacts directly with AMFR/gp78 (via its VIM). Interacts with RHBDD1 (via C-terminal domain). Interacts with SPRTN; leading to recruitment to stalled replication forks. Interacts with WASHC5. Interacts with UBOX5. Interacts (via N-terminus) with UBXN7, UBXN8, and probably several other UBX domain-containing proteins (via UBX domains); the interactions are mutually exclusive with VIM-dependent interactions such as those with AMFR and SELENOS. Forms a complex with UBQLN1 and UBXN4. Interacts (via the PIM motif) with RNF31 (via the PUB domain). Interacts with RIGI and RNF125; interaction takes place when RIGI is ubiquitinated via 'Lys-63'-linked ubiquitin on its CARD domains, leading to recruit RNF125 and promote ubiquitination and degradation of RIGI. Interacts with BAG6. Interacts with UBXN10. Interacts with UBXN6; the interaction with UBXN6 is direct and competitive with UFD1. Forms a ternary complex with CAV1 and UBXN6. Interacts with PLAA, UBXN6 and YOD1; may form a complex involved in macroautophagy. Interacts with ANKZF1. Interacts with ubiquitin-binding protein FAF1. Interacts with ZFAND2B (via VIM motif); the interaction is direct. Interacts with ZFAND1 (via its ubiquitin-like region); this interaction occurs in an arsenite-dependent manner. Interacts with CCDC47. Interacts with LMBR1L and UBAC2. Interacts with ATXN3. Interacts with TEX264; bridging VCP to covalent DNA-protein cross-links (DPCs). ISGylated. In terms of processing, methylation at Lys-315 catalyzed by VCPKMT is increased in the presence of ASPSCR1. Lys-315 methylation may decrease ATPase activity. Post-translationally, phosphorylated by tyrosine kinases in response to T-cell antigen receptor activation. Phosphorylated in mitotic cells.

It localises to the cytoplasm. Its subcellular location is the cytosol. The protein localises to the endoplasmic reticulum. It is found in the nucleus. The protein resides in the stress granule. It carries out the reaction ATP + H2O = ADP + phosphate + H(+). Functionally, necessary for the fragmentation of Golgi stacks during mitosis and for their reassembly after mitosis. Involved in the formation of the transitional endoplasmic reticulum (tER). The transfer of membranes from the endoplasmic reticulum to the Golgi apparatus occurs via 50-70 nm transition vesicles which derive from part-rough, part-smooth transitional elements of the endoplasmic reticulum (tER). Vesicle budding from the tER is an ATP-dependent process. The ternary complex containing UFD1, VCP and NPLOC4 binds ubiquitinated proteins and is necessary for the export of misfolded proteins from the ER to the cytoplasm, where they are degraded by the proteasome. The NPLOC4-UFD1-VCP complex regulates spindle disassembly at the end of mitosis and is necessary for the formation of a closed nuclear envelope. Regulates E3 ubiquitin-protein ligase activity of RNF19A. Component of the VCP/p97-AMFR/gp78 complex that participates in the final step of the sterol-mediated ubiquitination and endoplasmic reticulum-associated degradation (ERAD) of HMGCR. Mediates the endoplasmic reticulum-associated degradation of CHRNA3 in cortical neurons as part of the STUB1-VCP-UBXN2A complex. Involved in endoplasmic reticulum stress-induced pre-emptive quality control, a mechanism that selectively attenuates the translocation of newly synthesized proteins into the endoplasmic reticulum and reroutes them to the cytosol for proteasomal degradation. Involved in clearance process by mediating G3BP1 extraction from stress granules. Also involved in DNA damage response: recruited to double-strand breaks (DSBs) sites in a RNF8- and RNF168-dependent manner and promotes the recruitment of TP53BP1 at DNA damage sites. Recruited to stalled replication forks by SPRTN: may act by mediating extraction of DNA polymerase eta (POLH) to prevent excessive translesion DNA synthesis and limit the incidence of mutations induced by DNA damage. Together with SPRTN metalloprotease, involved in the repair of covalent DNA-protein cross-links (DPCs) during DNA synthesis. Involved in interstrand cross-link repair in response to replication stress by mediating unloading of the ubiquitinated CMG helicase complex. Mediates extraction of PARP1 trapped to chromatin: recognizes and binds ubiquitinated PARP1 and promotes its removal. Required for cytoplasmic retrotranslocation of stressed/damaged mitochondrial outer-membrane proteins and their subsequent proteasomal degradation. Essential for the maturation of ubiquitin-containing autophagosomes and the clearance of ubiquitinated protein by autophagy. Acts as a negative regulator of type I interferon production by interacting with RIGI: interaction takes place when RIGI is ubiquitinated via 'Lys-63'-linked ubiquitin on its CARD domains, leading to recruit RNF125 and promote ubiquitination and degradation of RIGI. May play a role in the ubiquitin-dependent sorting of membrane proteins to lysosomes where they undergo degradation. May more particularly play a role in caveolins sorting in cells. By controlling the steady-state expression of the IGF1R receptor, indirectly regulates the insulin-like growth factor receptor signaling pathway. This is Transitional endoplasmic reticulum ATPase (VCP) from Bos taurus (Bovine).